We begin with the raw amino-acid sequence, 1060 residues long: Isoleucine--tRNA ligase (1060 aa).

A 'HIGH' region motif is present at residues 55–65 (PTANGTPGVHH). Positions 608–612 (KMSKH) match the 'KMSKS' region motif. Residue Lys-611 coordinates ATP.

The protein belongs to the class-I aminoacyl-tRNA synthetase family. IleS type 2 subfamily. As to quaternary structure, monomer. It depends on Zn(2+) as a cofactor.

It localises to the cytoplasm. The enzyme catalyses tRNA(Ile) + L-isoleucine + ATP = L-isoleucyl-tRNA(Ile) + AMP + diphosphate. Its function is as follows. Catalyzes the attachment of isoleucine to tRNA(Ile). As IleRS can inadvertently accommodate and process structurally similar amino acids such as valine, to avoid such errors it has two additional distinct tRNA(Ile)-dependent editing activities. One activity is designated as 'pretransfer' editing and involves the hydrolysis of activated Val-AMP. The other activity is designated 'posttransfer' editing and involves deacylation of mischarged Val-tRNA(Ile). This chain is Isoleucine--tRNA ligase, found in Thermobifida fusca (strain YX).